Consider the following 154-residue polypeptide: Myoglobin (154 aa).

A Globin domain is found at 2–148 (GLSDGEWQLV…FRKDIAAKYK (147 aa)). At Ser4 the chain carries Phosphoserine. His65 is a binding site for nitrite. An O2-binding site is contributed by His65. Residue Thr68 is modified to Phosphothreonine. Position 94 (His94) interacts with heme b.

The protein belongs to the globin family. In terms of assembly, monomeric.

It is found in the cytoplasm. The protein resides in the sarcoplasm. It catalyses the reaction Fe(III)-heme b-[protein] + nitric oxide + H2O = Fe(II)-heme b-[protein] + nitrite + 2 H(+). The enzyme catalyses H2O2 + AH2 = A + 2 H2O. Functionally, monomeric heme protein which primary function is to store oxygen and facilitate its diffusion within muscle tissues. Reversibly binds oxygen through a pentacoordinated heme iron and enables its timely and efficient release as needed during periods of heightened demand. Depending on the oxidative conditions of tissues and cells, and in addition to its ability to bind oxygen, it also has a nitrite reductase activity whereby it regulates the production of bioactive nitric oxide. Under stress conditions, like hypoxia and anoxia, it also protects cells against reactive oxygen species thanks to its pseudoperoxidase activity. In Castor fiber (Eurasian beaver), this protein is Myoglobin (MB).